The following is a 109-amino-acid chain: ATP-dependent Clp protease adapter protein ClpS (109 aa).

Positions 1 to 20 (MAERKQGGQGNGVGSSVVTE) are disordered.

The protein belongs to the ClpS family. Binds to the N-terminal domain of the chaperone ClpA.

In terms of biological role, involved in the modulation of the specificity of the ClpAP-mediated ATP-dependent protein degradation. The sequence is that of ATP-dependent Clp protease adapter protein ClpS from Caulobacter vibrioides (strain NA1000 / CB15N) (Caulobacter crescentus).